We begin with the raw amino-acid sequence, 160 residues long: Transcriptional repressor NrdR (160 aa).

Positions 1–11 are enriched in polar residues; it reads MRCPNCNSLDT. Residues 1 to 20 are disordered; the sequence is MRCPNCNSLDTQVKDSRPTE. A zinc finger spans residues 3-34; it reads CPNCNSLDTQVKDSRPTEDSSVIRRRRVCIAC. The region spanning 49–139 is the ATP-cone domain; it reads LTVIKRNGRR…VYRNFREAKD (91 aa).

The protein belongs to the NrdR family. The cofactor is Zn(2+).

Functionally, negatively regulates transcription of bacterial ribonucleotide reductase nrd genes and operons by binding to NrdR-boxes. The sequence is that of Transcriptional repressor NrdR from Rhodopseudomonas palustris (strain HaA2).